A 544-amino-acid chain; its full sequence is Aspartokinase 2, chloroplastic (544 aa).

The N-terminal 84 residues, 1 to 84 (MASLQLYGVK…SSGTGKELTC (84 aa)), are a transit peptide targeting the chloroplast. Lysine 87, glycine 90, and serine 119 together coordinate ATP. Glutamate 203 is a substrate binding site. ACT domains follow at residues 401-479 (IAST…RRSI) and 481-544 (SLIG…ETDP).

The protein belongs to the aspartokinase family. In terms of tissue distribution, expressed in stems, leaves, floral organs and young seedlings.

The protein resides in the plastid. It is found in the chloroplast. The catalysed reaction is L-aspartate + ATP = 4-phospho-L-aspartate + ADP. It participates in amino-acid biosynthesis; L-lysine biosynthesis via DAP pathway; (S)-tetrahydrodipicolinate from L-aspartate: step 1/4. It functions in the pathway amino-acid biosynthesis; L-methionine biosynthesis via de novo pathway; L-homoserine from L-aspartate: step 1/3. Its pathway is amino-acid biosynthesis; L-threonine biosynthesis; L-threonine from L-aspartate: step 1/5. Its activity is regulated as follows. Allosterically inhibited by lysine, but not by S-adenosyl-L-methionine (SAM). K(0.5) for lysine in the presence of physiological concentrations of substrates is 12.5 uM. No inhibition by threonine or leucine and no activation or inhibition by alanine, cysteine, isoleucine, serine, valine, methionine, glutamine, asparagine, glutamic acid or arginine. In terms of biological role, involved in the first step of essential amino acids lysine, threonine, methionine and isoleucine synthesis via the aspartate-family pathway. The protein is Aspartokinase 2, chloroplastic (AK2) of Arabidopsis thaliana (Mouse-ear cress).